The sequence spans 306 residues: Porphobilinogen deaminase (306 aa).

S-(dipyrrolylmethanemethyl)cysteine is present on Cys-239.

Belongs to the HMBS family. As to quaternary structure, monomer. The cofactor is dipyrromethane.

It carries out the reaction 4 porphobilinogen + H2O = hydroxymethylbilane + 4 NH4(+). Its pathway is porphyrin-containing compound metabolism; protoporphyrin-IX biosynthesis; coproporphyrinogen-III from 5-aminolevulinate: step 2/4. Tetrapolymerization of the monopyrrole PBG into the hydroxymethylbilane pre-uroporphyrinogen in several discrete steps. This Helicobacter pylori (strain P12) protein is Porphobilinogen deaminase.